The following is a 318-amino-acid chain: Melanocyte-stimulating hormone receptor (318 aa).

Topologically, residues 1 to 37 (MPMQGAQRKLLGSLNSTPTATSNLGLAANRTGAPCLE) are extracellular. Residue Asn29 is glycosylated (N-linked (GlcNAc...) asparagine). A helical membrane pass occupies residues 38–63 (LPIPNGLFLSLGLVSLVENVLVVAAI). Over 64–72 (AKNRNLHSS) the chain is Cytoplasmic. Residues 73 to 93 (MYCFICCLALSDLLVSGSNML) form a helical membrane-spanning segment. The Extracellular portion of the chain corresponds to 94–118 (ETAVILLLEAGVLATRASVVQQLHN). A helical transmembrane segment spans residues 119–140 (TIDVLTCSSMLCSLCFLGAIAV). The Cytoplasmic segment spans residues 141–163 (DRYISIFYALRYHSIMTLPRAQR). The chain crosses the membrane as a helical span at residues 164-183 (AVAAIWVASVLSSTLFITYY). Residues 184 to 191 (DHAAVLLC) lie on the Extracellular side of the membrane. The chain crosses the membrane as a helical span at residues 192–211 (LMVFFLAMLVLMAVLYVHML). Over 212-240 (ARARQHAQGIIRLHKRQPPAHKGFGLRGA) the chain is Cytoplasmic. A helical transmembrane segment spans residues 241–266 (ATLTILLGIFFLCWGPFFLCLTLVVF). Residues 267–279 (CPQHLTCNCIFKN) are Extracellular-facing. The chain crosses the membrane as a helical span at residues 280 to 300 (FKVFLTLIICNTIIDPLIYAF). The Cytoplasmic segment spans residues 301 to 317 (RSQELRRMLKEVLGRGR).

It belongs to the G-protein coupled receptor 1 family. As to quaternary structure, interacts with MGRN1, but does not undergo MGRN1-mediated ubiquitination; this interaction competes with GNAS-binding and thus inhibits agonist-induced cAMP production. Interacts with OPN3; the interaction results in a decrease in MC1R-mediated cAMP signaling and ultimately a decrease in melanin production in melanocytes.

The protein localises to the cell membrane. Functionally, receptor for MSH (alpha, beta and gamma) and ACTH. The activity of this receptor is mediated by G proteins which activate adenylate cyclase. Mediates melanogenesis, the production of eumelanin (black/brown) and phaeomelanin (red/yellow), via regulation of cAMP signaling in melanocytes. This chain is Melanocyte-stimulating hormone receptor (MC1R), found in Leontopithecus rosalia (Golden lion tamarin).